An 84-amino-acid polypeptide reads, in one-letter code: MAIIINIDVMLAKRKMSVTELSERVGITMANLSILKNGKAKAIRLSTLEAICKALECQPGDILEYRSDEDTGFVKKKYEGSTEK.

In terms of domain architecture, HTH cro/C1-type spans 7 to 62 (IDVMLAKRKMSVTELSERVGITMANLSILKNGKAKAIRLSTLEAICKALECQPGDI). A DNA-binding region (H-T-H motif) is located at residues 18 to 37 (VTELSERVGITMANLSILKN).

This is an uncharacterized protein from Bacillus subtilis (strain 168).